The chain runs to 367 residues: Selenoprotein Pa (367 aa).

The signal sequence occupies residues 1-19; sequence MWKALSLTLALCLLVGCSA. Sec59 is a non-standard amino acid (selenocysteine). A glycan (N-linked (GlcNAc...) asparagine) is linked at Asn109. Positions 191–220 are enriched in basic and acidic residues; that stretch reads EVNKPVEEEPRQDHGHHEHGHHEHQGEAER. The disordered stretch occupies residues 191–241; that stretch reads EVNKPVEEEPRQDHGHHEHGHHEHQGEAERHRHGHHHPHHHHHHHRGQQQV. Over residues 221-237 the composition is skewed to basic residues; sequence HRHGHHHPHHHHHHHRG. Residues Sec267, Sec273, Sec279, Sec290, Sec292, Sec294, Sec310, Sec320, Sec322, Sec336, Sec338, Sec346, Sec353, Sec355, Sec362, and Sec364 are each a non-standard amino acid (selenocysteine). The segment at 309-367 is disordered; it reads LUHCDEPLPASUPUQGLKEQDNHIKETUQURPAPPAEUELSQPTUVUPAGDATUGURKK. A compositionally biased stretch (basic and acidic residues) spans 326–336; the sequence is KEQDNHIKETU.

This sequence belongs to the selenoprotein P family.

The protein localises to the secreted. In terms of biological role, might be responsible for some of the extracellular antioxidant defense properties of selenium or might be involved in the transport of selenium. The protein is Selenoprotein Pa (sepp1a) of Danio rerio (Zebrafish).